A 102-amino-acid chain; its full sequence is Protein RnfH (102 aa).

It belongs to the UPF0125 (RnfH) family.

In Pseudomonas entomophila (strain L48), this protein is Protein RnfH.